The primary structure comprises 875 residues: Leucine--tRNA ligase (875 aa).

Residues Pro-43–His-53 carry the 'HIGH' region motif. Residues Lys-633–Ser-637 carry the 'KMSKS' region motif. Lys-636 is an ATP binding site.

Belongs to the class-I aminoacyl-tRNA synthetase family.

It is found in the cytoplasm. The enzyme catalyses tRNA(Leu) + L-leucine + ATP = L-leucyl-tRNA(Leu) + AMP + diphosphate. This Bartonella bacilliformis (strain ATCC 35685 / KC583 / Herrer 020/F12,63) protein is Leucine--tRNA ligase.